Consider the following 318-residue polypeptide: Thymidylate synthase (318 aa).

DUMP contacts are provided by residues Arg-25 and 180-181 (RR). Residue Cys-200 is the Nucleophile of the active site. Residues 220–223 (RSGD), Asn-231, and 261–263 (HIY) each bind dUMP. Asp-223 contacts (6R)-5,10-methylene-5,6,7,8-tetrahydrofolate. Residue Ala-317 participates in (6R)-5,10-methylene-5,6,7,8-tetrahydrofolate binding.

The protein belongs to the thymidylate synthase family. Bacterial-type ThyA subfamily. In terms of assembly, homodimer.

The protein localises to the cytoplasm. It catalyses the reaction dUMP + (6R)-5,10-methylene-5,6,7,8-tetrahydrofolate = 7,8-dihydrofolate + dTMP. It participates in pyrimidine metabolism; dTTP biosynthesis. Catalyzes the reductive methylation of 2'-deoxyuridine-5'-monophosphate (dUMP) to 2'-deoxythymidine-5'-monophosphate (dTMP) while utilizing 5,10-methylenetetrahydrofolate (mTHF) as the methyl donor and reductant in the reaction, yielding dihydrofolate (DHF) as a by-product. This enzymatic reaction provides an intracellular de novo source of dTMP, an essential precursor for DNA biosynthesis. In Bacillus cereus (strain ATCC 14579 / DSM 31 / CCUG 7414 / JCM 2152 / NBRC 15305 / NCIMB 9373 / NCTC 2599 / NRRL B-3711), this protein is Thymidylate synthase.